Consider the following 107-residue polypeptide: Thioredoxin (107 aa).

In terms of domain architecture, Thioredoxin spans 2 to 107 (SATPQVSDAS…TLASTLEKYL (106 aa)). A disulfide bridge links Cys-32 with Cys-35.

The protein belongs to the thioredoxin family.

Its function is as follows. Component of the thioredoxin-thioredoxin reductase system. Participates in various redox reactions through the reversible oxidation of its active center dithiol to a disulfide and catalyzes dithiol-disulfide exchange reactions. This Synechocystis sp. (strain ATCC 27184 / PCC 6803 / Kazusa) protein is Thioredoxin (trxA).